We begin with the raw amino-acid sequence, 833 residues long: P protein (833 aa).

Residues 1 to 172 (MRLENKDIRL…QVSKLGCCVR (172 aa)) are Cytoplasmic-facing. Residues 173–193 (WIKITGLFVFVVLCSILFSLY) traverse the membrane as a helical segment. The Extracellular segment spans residues 194-325 (PDQGKFWQLL…QFLGASVEAQ (132 aa)). 3 N-linked (GlcNAc...) asparagine glycosylation sites follow: N210, N214, and N269. Residues 326-346 (VASAVAILAGVYTLIIFEIVH) form a helical membrane-spanning segment. At 347–348 (RT) the chain is on the cytoplasmic side. Residues 349–369 (LAAMLGALAALAALAVVGDRP) traverse the membrane as a helical segment. The Extracellular segment spans residues 370–381 (SLTHVVEWIDFE). A helical transmembrane segment spans residues 382-402 (TLALLFGMMILVAVFSETGFF). Over 403–417 (DYCAVKAYQLSRGRV) the chain is Cytoplasmic. Residues 418–438 (WAMIFMLCLMAAILSAFLDNV) traverse the membrane as a helical segment. Residues 439 to 501 (TTMLLFTPVT…ELRKMGLDFA (63 aa)) are Extracellular-facing. A helical transmembrane segment spans residues 502–522 (GFTAHMFLGICLVLLVSFPLL). Residues 523–617 (RLLYWNKKLY…RKHRISDRSL (95 aa)) lie on the Cytoplasmic side of the membrane. Residues 618–638 (LVKCLTVLGFVISMFFLNSFV) traverse the membrane as a helical segment. P639 is a topological domain (extracellular). A helical membrane pass occupies residues 640 to 660 (GIHLDLGWIAILGAIWLLILA). Residues 661–675 (DIHDFEIILHRVEWA) are Cytoplasmic-facing. Residues 676–696 (TLLFFAALFVLMEALTHLHLV) form a helical membrane-spanning segment. The Extracellular portion of the chain corresponds to 697 to 718 (EYVGEQTALLIKMVPEDQRFAA). A helical transmembrane segment spans residues 719 to 739 (AIVLIVWVSALASSLIDNIPF). Residues 740–759 (TATMIPVLLNLSQDPEISLP) lie on the Cytoplasmic side of the membrane. A helical transmembrane segment spans residues 760–780 (ALPLMYALALGACLGGNGTLI). Over 781 to 810 (GASTNVVCAGIAEKHGYGFSFMEFFRLGFP) the chain is Extracellular. Residues 811–831 (VMLMSCTIGMCYLLIAHIVVG) traverse the membrane as a helical segment. The Cytoplasmic segment spans residues 832–833 (WN).

The protein belongs to the CitM (TC 2.A.11) transporter family. In terms of tissue distribution, most abundant in melanocytes. Also present in neonatal and adult eye tissue presumably as a result of expression in the retinal pigmented epithelium and choroid body, known sites of melanogenesis in the eye. Small but detectable amounts also observed in fetal, neonatal and adult brain. Moderate amounts detected in adult testis and ovary. Not detected in heart, kidney, spleen, liver or thymus.

Its subcellular location is the melanosome membrane. The catalysed reaction is chloride(in) = chloride(out). In terms of biological role, contributes to a melanosome-specific anion (chloride) current that modulates melanosomal pH for optimal tyrosinase activity required for melanogenesis and the melanosome maturation. One of the components of the mammalian pigmentary system. May serve as a key control point at which color variation is determined. Major determinant of eye color. Seems to regulate the post-translational processing of tyrosinase, which catalyzes the limiting reaction in melanin synthesis. The chain is P protein (Oca2) from Mus musculus (Mouse).